We begin with the raw amino-acid sequence, 309 residues long: Elongation factor Ts (309 aa).

Residues threonine 82–valine 85 are involved in Mg(2+) ion dislocation from EF-Tu.

Belongs to the EF-Ts family.

It is found in the cytoplasm. Functionally, associates with the EF-Tu.GDP complex and induces the exchange of GDP to GTP. It remains bound to the aminoacyl-tRNA.EF-Tu.GTP complex up to the GTP hydrolysis stage on the ribosome. The polypeptide is Elongation factor Ts (Rickettsia felis (strain ATCC VR-1525 / URRWXCal2) (Rickettsia azadi)).